We begin with the raw amino-acid sequence, 196 residues long: ATP-dependent Clp protease proteolytic subunit 1 (196 aa).

Ser-96 acts as the Nucleophile in catalysis. His-121 is a catalytic residue.

Belongs to the peptidase S14 family. In terms of assembly, fourteen ClpP subunits assemble into 2 heptameric rings which stack back to back to give a disk-like structure with a central cavity, resembling the structure of eukaryotic proteasomes.

Its subcellular location is the cytoplasm. It catalyses the reaction Hydrolysis of proteins to small peptides in the presence of ATP and magnesium. alpha-casein is the usual test substrate. In the absence of ATP, only oligopeptides shorter than five residues are hydrolyzed (such as succinyl-Leu-Tyr-|-NHMec, and Leu-Tyr-Leu-|-Tyr-Trp, in which cleavage of the -Tyr-|-Leu- and -Tyr-|-Trp bonds also occurs).. In terms of biological role, cleaves peptides in various proteins in a process that requires ATP hydrolysis. Has a chymotrypsin-like activity. Plays a major role in the degradation of misfolded proteins. The sequence is that of ATP-dependent Clp protease proteolytic subunit 1 from Prochlorococcus marinus subsp. pastoris (strain CCMP1986 / NIES-2087 / MED4).